The primary structure comprises 164 residues: Urease subunit beta (164 aa).

2 stretches are compositionally biased toward polar residues: residues 1–10 (MSTKTNSTKA) and 20–32 (TNRG…GYSE). The disordered stretch occupies residues 1 to 32 (MSTKTNSTKATSEKTDSLKTNRGTKSSAGYSE).

Belongs to the urease beta subunit family. In terms of assembly, heterotrimer of UreA (gamma), UreB (beta) and UreC (alpha) subunits. Three heterotrimers associate to form the active enzyme.

It is found in the cytoplasm. The catalysed reaction is urea + 2 H2O + H(+) = hydrogencarbonate + 2 NH4(+). It participates in nitrogen metabolism; urea degradation; CO(2) and NH(3) from urea (urease route): step 1/1. The chain is Urease subunit beta from Yersinia enterocolitica serotype O:8 / biotype 1B (strain NCTC 13174 / 8081).